The primary structure comprises 372 residues: Chemerin-like receptor 1 (372 aa).

The Extracellular segment spans residues 1 to 39 (MEYEGYNDSSIYGEEYSDGSDYIVDLEEAGPLEAKVAEV). N-linked (GlcNAc...) asparagine glycosylation is present at Asn7. A helical membrane pass occupies residues 40–62 (FLVVIYSLVCFLGILGNGLVIVI). The Cytoplasmic segment spans residues 63-73 (ATFKMKKTVNT). The helical transmembrane segment at 74–95 (VWFVNLAVADFLFNIFLPIHIT) threads the bilayer. Over 96–112 (YAAMDYHWVFGKAMCKI) the chain is Extracellular. A disulfide bridge links Cys110 with Cys188. Residues 113–133 (SSFLLSHNMYTSVFLLTVISF) form a helical membrane-spanning segment. The Cytoplasmic segment spans residues 134 to 152 (DRCISVLLPVWSQNHRSVR). The helical transmembrane segment at 153-174 (LAYMTCVVVWVLAFFLSSPSLV) threads the bilayer. Over 175–223 (FRDTVSTSHGKITCFNNFSLAAPEPFSHSTHPRTDPVGYSRHVAVTVTR) the chain is Extracellular. Asn191 carries an N-linked (GlcNAc...) asparagine glycan. A helical transmembrane segment spans residues 224–244 (FLCGFLIPVFIITACYLTIVF). Residues 245–260 (KLQRNRLAKTKKPFKI) are Cytoplasmic-facing. The helical transmembrane segment at 261–281 (IITIIITFFLCWCPYHTLYLL) threads the bilayer. Residues 282-299 (ELHHTAVPASVFSLGLPL) lie on the Extracellular side of the membrane. Residues 300-319 (ATAVAIANSCMNPILYVFMG) traverse the membrane as a helical segment. Residues 320–372 (HDFKKFKVALFSRLVNALSEDTGPSSYPSHRSFTKMSSLIEKASVNEKETSTL) lie on the Cytoplasmic side of the membrane. A Phosphoserine modification is found at Ser338. Thr341 carries the phosphothreonine modification. Ser348, Ser351, and Ser357 each carry phosphoserine. Thr371 carries the phosphothreonine modification.

It belongs to the chemokine-like receptor (CMKLR) family. As to expression, high expression in heart and lung, low in small intestines, colon, kidney, liver, uterus and brain.

It is found in the cell membrane. In terms of biological role, receptor for the chemoattractant adipokine chemerin/RARRES2 and for the omega-3 fatty acid derived molecule resolvin E1. Interaction with RARRES2 initiates activation of G proteins G(i)/G(o) and beta-arrestin pathways inducing cellular responses via second messenger pathways such as intracellular calcium mobilization, phosphorylation of MAP kinases MAPK1/MAPK3 (ERK1/2), TYRO3, MAPK14/P38MAPK and PI3K leading to multifunctional effects, like, reduction of immune responses, enhancing of adipogenesis and angionesis. Resolvin E1 down-regulates cytokine production in macrophages by reducing the activation of MAPK1/3 (ERK1/2) and NF-kappa-B. Positively regulates adipogenesis and adipocyte metabolism. This Rattus norvegicus (Rat) protein is Chemerin-like receptor 1 (Cmklr1).